The following is a 539-amino-acid chain: MLKGFTPWPDELAETYRKNGCWAGETFGDLLRDRAAKYGDRIAITCGNTHWSYRELDTRADRLAAGFQKLGIQQMDRVVVQLPNIKEFFEVIFALFRLGALPVFALPSHRSSEITYFCEFAEAAAYIIPDAYSGFDYRSLARQVQSKLPTLKNIIVAGEAEEFLPLEDLHAEPVKLPEVKSSDVAFLQLSGGSTGLSKLIPRTHDDYIYSLKRSVEVCWLDHSTVYLAALPMAHNYPLSSPGVLGVLYAGGRVVLSPSPSPDDAFPLIEREKVTITALVPPLAMVWMDAASSRRDDLSSLQVLQVGGAKFSAEAARRVKAVFGCTLQQVFGMAEGLVNYTRLDDPEEIIVNTQGKPMSPYDEMRVWDDHDRDVKPGETGHLLTRGPYTIRGYYKAEEHNAASFTEDGFYRTGDIVRLTRDGYIVVEGRAKDQINRGGEKVAAEEVENHLLAHPAVHDAAMVSMPDQFLGERSCVFIIPRDEAPKAAELKAFLRERGLAAYKIPDRVEFVESFPQTGVGKVSKKALREAISEKLLAGFKK.

Gly191 is a binding site for ATP. Substrate is bound by residues His234–Asn235 and Ser240. ATP is bound by residues Gly307, Val329, Asp413, Arg428, and Lys519. A substrate-binding site is contributed by Lys519.

It belongs to the ATP-dependent AMP-binding enzyme family.

The protein localises to the cytoplasm. It catalyses the reaction 2,3-dihydroxybenzoate + holo-[ACP] + ATP = 2,3-dihydroxybenzoyl-[ACP] + AMP + diphosphate. Its pathway is siderophore biosynthesis; bacillibactin biosynthesis. Involved in the biosynthesis of the catecholic siderophore bacillibactin. Catalyzes the activation of the carboxylate group of 2,3-dihydroxy-benzoate (DHB), via ATP-dependent PPi exchange reactions, to the acyladenylate. This chain is 2,3-dihydroxybenzoate-AMP ligase, found in Bacillus subtilis (strain 168).